Here is a 1955-residue protein sequence, read N- to C-terminus: Rootletin (1955 aa).

Coiled-coil stretches lie at residues 29-58 (EENRRNRQVIQDINDQLQRFRQRANAESIE), 162-223 (EENL…QQHT), 284-1303 (LMRK…AVES), 1368-1579 (VGVT…EELR), and 1607-1863 (RRWE…RTKG). Disordered regions lie at residues 321–341 (VTENYMKSEEKANERQRDLKR), 391–451 (LTTK…KKLD), 504–551 (LKER…RSLK), 907–935 (EKLNEQNDGDRAEWSNERNRLESSKNEAV), and 961–998 (RDLEDSHEKSRDLDDKLRKMELTDEEKEEDRKKEQKTL). 2 stretches are compositionally biased toward basic and acidic residues: residues 326–341 (MKSEEKANERQRDLKR) and 396–451 (GEID…KKLD). Basic and acidic residues-rich tracts occupy residues 907 to 931 (EKLNEQNDGDRAEWSNERNRLESSK), 961 to 982 (RDLEDSHEKSRDLDDKLRKMEL), and 989 to 998 (EDRKKEQKTL).

The protein belongs to the rootletin family. In terms of tissue distribution, expressed in head ciliated neurons.

Its subcellular location is the cytoplasm. The protein localises to the cytoskeleton. It localises to the cilium basal body. The protein resides in the cilium axoneme. Functionally, major structural component of the ciliary rootlet, a cytoskeletal-like structure in ciliated cells which originates from the basal body at the proximal end of a cilium and extends proximally toward the cell nucleus. Required for cilia integrity and function in sensory neurons. Maintains cilia integrity, partly by modulating the assembly and transport of intraflagellar proteins along the ciliary axoneme. Required for normal mating behavior and normal responses to environmental and chemical stimuli. This Caenorhabditis elegans protein is Rootletin.